Consider the following 335-residue polypeptide: Karyogamy protein KAR4 (335 aa).

The segment at 1-25 (MAFQDPTYDQNKSRHINNSHLQGPN) is disordered. A compositionally biased stretch (polar residues) spans 16-25 (INNSHLQGPN).

The protein belongs to the MT-A70-like family. As to quaternary structure, component of the MIS (mRNA N6-methyladenosine (m6A) methylation) complex, at least composed of IME4, KAR4, MUM2, SLZ1, and VIR1. Interacts with VIR1.

The protein localises to the nucleus. Its subcellular location is the cytoplasm. In terms of biological role, component of the MIS complex, a complex that mediates N6-methyladenosine (m6A) methylation of meiotic mRNAs and is required for initiation of meiosis, progression through the meiotic divisions and sporulation. May assist STE12 in the pheromone-dependent expression of KAR3 and CIK1. This Saccharomyces cerevisiae (strain ATCC 204508 / S288c) (Baker's yeast) protein is Karyogamy protein KAR4 (KAR4).